The primary structure comprises 297 residues: Tyrosine recombinase XerD (297 aa).

One can recognise a Core-binding (CB) domain in the interval 1–86; sequence MNDLIEDFLH…SLRSFFHYLM (86 aa). Positions 107 to 291 constitute a Tyr recombinase domain; it reads GLPKVLNLDD…TKLRLKDVYK (185 aa). Catalysis depends on residues Arg-147, Lys-171, His-243, Arg-246, and His-269. The active-site O-(3'-phospho-DNA)-tyrosine intermediate is the Tyr-278.

It belongs to the 'phage' integrase family. XerD subfamily. As to quaternary structure, forms a cyclic heterotetrameric complex composed of two molecules of XerC and two molecules of XerD.

The protein resides in the cytoplasm. In terms of biological role, site-specific tyrosine recombinase, which acts by catalyzing the cutting and rejoining of the recombining DNA molecules. The XerC-XerD complex is essential to convert dimers of the bacterial chromosome into monomers to permit their segregation at cell division. It also contributes to the segregational stability of plasmids. The protein is Tyrosine recombinase XerD of Listeria monocytogenes serovar 1/2a (strain ATCC BAA-679 / EGD-e).